Consider the following 856-residue polypeptide: Leucine--tRNA ligase (856 aa).

The 'HIGH' region motif lies at 53–63; that stretch reads PYPSGNLHMGH. The 'KMSKS' region signature appears at 622–626; the sequence is KMSKS. Lys-625 contacts ATP.

It belongs to the class-I aminoacyl-tRNA synthetase family.

Its subcellular location is the cytoplasm. The enzyme catalyses tRNA(Leu) + L-leucine + ATP = L-leucyl-tRNA(Leu) + AMP + diphosphate. The chain is Leucine--tRNA ligase from Prochlorococcus marinus (strain MIT 9301).